The chain runs to 205 residues: Imidazole glycerol phosphate synthase subunit HisH (205 aa).

The Glutamine amidotransferase type-1 domain occupies M1–K205. Residue C79 is the Nucleophile of the active site. Active-site residues include H181 and E183.

Heterodimer of HisH and HisF.

The protein resides in the cytoplasm. It catalyses the reaction 5-[(5-phospho-1-deoxy-D-ribulos-1-ylimino)methylamino]-1-(5-phospho-beta-D-ribosyl)imidazole-4-carboxamide + L-glutamine = D-erythro-1-(imidazol-4-yl)glycerol 3-phosphate + 5-amino-1-(5-phospho-beta-D-ribosyl)imidazole-4-carboxamide + L-glutamate + H(+). The enzyme catalyses L-glutamine + H2O = L-glutamate + NH4(+). Its pathway is amino-acid biosynthesis; L-histidine biosynthesis; L-histidine from 5-phospho-alpha-D-ribose 1-diphosphate: step 5/9. Functionally, IGPS catalyzes the conversion of PRFAR and glutamine to IGP, AICAR and glutamate. The HisH subunit catalyzes the hydrolysis of glutamine to glutamate and ammonia as part of the synthesis of IGP and AICAR. The resulting ammonia molecule is channeled to the active site of HisF. This is Imidazole glycerol phosphate synthase subunit HisH from Dehalococcoides mccartyi (strain ATCC BAA-2266 / KCTC 15142 / 195) (Dehalococcoides ethenogenes (strain 195)).